The chain runs to 247 residues: Disease resistance protein BAK6 (247 aa).

The first 24 residues, 1–24, serve as a signal peptide directing secretion; the sequence is MAAVQFAAAGVLTGLLALATLASC. 3 N-linked (GlcNAc...) asparagine glycosylation sites follow: N66, N104, and N113. LRR repeat units lie at residues 90-114, 116-138, 139-161, 162-186, 188-210, and 213-237; these read LESLQYMELFGNSLNGSIPSTLGNL, DLISLDLWDNLLTGPIPTTLGSI, STLRYLRLYENNLTGPIPPSFGN, LTSLLELKLHRNSLSGSIPASLGNI, SLQFLKLNENMLTGTVPLEVLSL, and VGNLTELNIARNNLDGTVRSSGLRV. N150 and N161 each carry an N-linked (GlcNAc...) asparagine glycan. The N-linked (GlcNAc...) asparagine glycan is linked to N215.

Interacts with WAK17 isoform 1; the interaction is direct. In terms of assembly, (Microbial infection) Interacts with G.zeae CFEM1; the interaction is direct. Interacts with G.zeae CFEMN1; the interaction is direct. Interacts with G.zeae CFEM5; the interaction is direct.

Functionally, contributes to activation of the hypersensitive response, a form of programmed cell death, upon fungal infection. May sense the presence of fungal material and relay the signal to WAK17 isoform 1. The polypeptide is Disease resistance protein BAK6 (Zea mays (Maize)).